A 195-amino-acid polypeptide reads, in one-letter code: Imidazoleglycerol-phosphate dehydratase (195 aa).

This sequence belongs to the imidazoleglycerol-phosphate dehydratase family.

The protein localises to the cytoplasm. It carries out the reaction D-erythro-1-(imidazol-4-yl)glycerol 3-phosphate = 3-(imidazol-4-yl)-2-oxopropyl phosphate + H2O. It functions in the pathway amino-acid biosynthesis; L-histidine biosynthesis; L-histidine from 5-phospho-alpha-D-ribose 1-diphosphate: step 6/9. The chain is Imidazoleglycerol-phosphate dehydratase from Thermotoga petrophila (strain ATCC BAA-488 / DSM 13995 / JCM 10881 / RKU-1).